Here is a 354-residue protein sequence, read N- to C-terminus: Homer protein homolog 1 (354 aa).

The 110-residue stretch at 1 to 110 (MGEQPIFSTR…EKFQEFKEAA (110 aa)) folds into the WH1 domain. Position 2 is an N-acetylglycine (G2). Positions 114 to 172 (KEKSQEKMELTSTPSQESAGGDLQSPLTPESINGTDDERTPDLTQNSEPRPEPTQNALP) are disordered. Composition is skewed to polar residues over residues 138–147 (SPLTPESING) and 155–172 (DLTQ…NALP). Positions 181 to 352 (KHWEAELATL…LRDNLAKLLE (172 aa)) form a coiled coil. The segment at 290 to 354 (KLQEVEIRNK…DNLAKLLERS (65 aa)) is required for tetramerization. S306 carries the phosphoserine modification.

Belongs to the Homer family. In terms of assembly, tetramer; this tetrameric structure is critical for forming the high-order complex with SHANK1, which in turn is necessary for the structural and functional integrity of dendritic spines. Interacts with GRM1, GRM5, ITPR1, DNM3, RYR1, RYR2 and SHANK3. Interacts with IFT57 and OPHN1. Encodes a coiled-coil structure that mediates homo- and heteromultimerization. Interacts with SHANK1; forms high-order polymerized complex with a mesh-like network structure, at least composed of SHANK1, HOMER1 and DLGAP1; the complex formation is SHANK1 multimerization dependent. Interacts with NFATC4. Interacts with DAGLA (via PPXXF motif); this interaction is required for the cell membrane localization of DAGLA. Interacts with SRGAP2.

It is found in the cytoplasm. Its subcellular location is the postsynaptic density. The protein resides in the synapse. The protein localises to the cell projection. It localises to the dendritic spine. In terms of biological role, postsynaptic density scaffolding protein. Binds and cross-links cytoplasmic regions of GRM1, GRM5, ITPR1, DNM3, RYR1, RYR2, SHANK1 and SHANK3. By physically linking GRM1 and GRM5 with ER-associated ITPR1 receptors, it aids the coupling of surface receptors to intracellular calcium release. May also couple GRM1 to PI3 kinase through its interaction with AGAP2. Forms a high-order complex with SHANK1, which in turn is necessary for the structural and functional integrity of dendritic spines. Negatively regulates T cell activation by inhibiting the calcineurin-NFAT pathway. Acts by competing with calcineurin/PPP3CA for NFAT protein binding, hence preventing NFAT activation by PPP3CA. The protein is Homer protein homolog 1 of Bos taurus (Bovine).